We begin with the raw amino-acid sequence, 104 residues long: MMLKPSIDTLLDKVPSKYSLVILQAKRAHELEAGEKATQDFKSVKSTLRALEEIESGNVVIHPDPSAKRASVRARIEAERLAKEEEERKIKEQIAKEKEDGEKI.

It belongs to the RNA polymerase subunit omega family. In terms of assembly, the RNAP catalytic core consists of 2 alpha, 1 beta, 1 beta' and 1 omega subunit. When a sigma factor is associated with the core the holoenzyme is formed, which can initiate transcription.

It catalyses the reaction RNA(n) + a ribonucleoside 5'-triphosphate = RNA(n+1) + diphosphate. Promotes RNA polymerase assembly. Latches the N- and C-terminal regions of the beta' subunit thereby facilitating its interaction with the beta and alpha subunits. The polypeptide is DNA-directed RNA polymerase subunit omega (Streptococcus agalactiae serotype Ia (strain ATCC 27591 / A909 / CDC SS700)).